A 91-amino-acid chain; its full sequence is Acylphosphatase (91 aa).

The 88-residue stretch at arginine 4 to tyrosine 91 folds into the Acylphosphatase-like domain. Residues arginine 19 and asparagine 37 contribute to the active site.

It belongs to the acylphosphatase family.

The enzyme catalyses an acyl phosphate + H2O = a carboxylate + phosphate + H(+). This chain is Acylphosphatase (acyP), found in Geotalea uraniireducens (strain Rf4) (Geobacter uraniireducens).